Reading from the N-terminus, the 339-residue chain is Dual specificity protein phosphatase 12 (339 aa).

N-acetylmethionine is present on M1. A disordered region spans residues M1 to G25. Positions H26–E170 constitute a Tyrosine-protein phosphatase domain. The Phosphocysteine intermediate role is filled by C114. H115 to R120 contributes to the substrate binding site. At S334 the chain carries Phosphoserine.

Belongs to the protein-tyrosine phosphatase family. Non-receptor class dual specificity subfamily. As to quaternary structure, monomer. It depends on Zn(2+) as a cofactor.

Its subcellular location is the nucleus. The protein resides in the cytoplasm. It localises to the cytosol. The catalysed reaction is O-phospho-L-tyrosyl-[protein] + H2O = L-tyrosyl-[protein] + phosphate. It catalyses the reaction O-phospho-L-seryl-[protein] + H2O = L-seryl-[protein] + phosphate. The enzyme catalyses O-phospho-L-threonyl-[protein] + H2O = L-threonyl-[protein] + phosphate. Functionally, dual specificity phosphatase; can dephosphorylate both phosphotyrosine and phosphoserine or phosphothreonine residues. Can dephosphorylate glucokinase (in vitro). Has phosphatase activity with the synthetic substrate 6,8-difluoro-4-methylumbelliferyl phosphate and other in vitro substrates. The sequence is that of Dual specificity protein phosphatase 12 (Dusp12) from Mus musculus (Mouse).